The following is a 209-amino-acid chain: Redox-sensing transcriptional repressor Rex (209 aa).

A DNA-binding region (H-T-H motif) is located at residues 16 to 55 (LYYRFIQNLSLSGKQRVSSAELSEAVKVDSATIRRDFSYF). 90–95 (GVGNLG) provides a ligand contact to NAD(+).

This sequence belongs to the transcriptional regulatory Rex family. As to quaternary structure, homodimer.

The protein resides in the cytoplasm. Its function is as follows. Modulates transcription in response to changes in cellular NADH/NAD(+) redox state. This Bacillus anthracis (strain A0248) protein is Redox-sensing transcriptional repressor Rex.